The primary structure comprises 81 residues: Penaeidin-3c (81 aa).

The N-terminal stretch at 1 to 19 is a signal peptide; the sequence is MRLVVCLVFLASFALVCQG. The residue at position 20 (glutamine 20) is a Pyrrolidone carboxylic acid. Disulfide bonds link cysteine 50–cysteine 65, cysteine 54–cysteine 72, and cysteine 66–cysteine 73. Residue serine 80 is modified to Serine amide.

This sequence belongs to the penaeidin family. Higher expression in hemocytes and to a lesser extent in heart, testis, gills, intestine, lymphoid organ and hepatopancreas. Traces in eyes and subcuticular epithelium. Not present in the brain.

Its subcellular location is the cytoplasmic granule. Functionally, antibacterial activity against M.luteus and E.coli bacteria. Antifungal activity against N.crassa and F.oxysporum. Presents chitin-binding activity. This is Penaeidin-3c from Penaeus vannamei (Whiteleg shrimp).